The chain runs to 301 residues: Protein KTI12 homolog (301 aa).

8–15 provides a ligand contact to ATP; it reads GQPCSGKS. The tract at residues 262-275 is calmodulin-binding; that stretch reads LRRTFIKLAGQYSL.

It belongs to the KTI12 family. As to quaternary structure, interacts with the elongator complex. Binds to calmodulin in a calcium-dependent manner.

The protein localises to the cytoplasm. The protein resides in the nucleus. In terms of biological role, elongator complex-associated factor that is not a structural subunit but rather transiently contacts the complex. Regulates both meristem activity and organ growth; acts as a positive regulator of adaxial leaf patterning. Required for an early step in synthesis of 5-carbamoylmethyl (ncm5) groups present on uridines (ncm5U) at the wobble position in tRNA. The polypeptide is Protein KTI12 homolog (Oryza sativa subsp. indica (Rice)).